The chain runs to 121 residues: UPF0102 protein HRM2_30940 (121 aa).

Belongs to the UPF0102 family.

This is UPF0102 protein HRM2_30940 from Desulforapulum autotrophicum (strain ATCC 43914 / DSM 3382 / VKM B-1955 / HRM2) (Desulfobacterium autotrophicum).